Here is a 101-residue protein sequence, read N- to C-terminus: NAD(P)H-quinone oxidoreductase subunit 4L, chloroplastic (101 aa).

Helical transmembrane passes span 2–22, 32–52, and 61–81; these read MLEH…YGLI, MCLE…SDLF, and IFSI…PAIV.

This sequence belongs to the complex I subunit 4L family. As to quaternary structure, NDH is composed of at least 16 different subunits, 5 of which are encoded in the nucleus.

The protein localises to the plastid. The protein resides in the chloroplast thylakoid membrane. The enzyme catalyses a plastoquinone + NADH + (n+1) H(+)(in) = a plastoquinol + NAD(+) + n H(+)(out). It carries out the reaction a plastoquinone + NADPH + (n+1) H(+)(in) = a plastoquinol + NADP(+) + n H(+)(out). NDH shuttles electrons from NAD(P)H:plastoquinone, via FMN and iron-sulfur (Fe-S) centers, to quinones in the photosynthetic chain and possibly in a chloroplast respiratory chain. The immediate electron acceptor for the enzyme in this species is believed to be plastoquinone. Couples the redox reaction to proton translocation, and thus conserves the redox energy in a proton gradient. This is NAD(P)H-quinone oxidoreductase subunit 4L, chloroplastic from Ceratophyllum demersum (Rigid hornwort).